The primary structure comprises 219 residues: Adenylate kinase (219 aa).

10–15 is an ATP binding site; sequence GAGKGT. Residues 30 to 59 form an NMP region; sequence STGDMLRVAVKVGTPLGIEAKKIMDSGGLV. Residues Thr-31, Arg-36, 57-59, 85-88, and Gln-92 each bind AMP; these read GLV and GFPR. An LID region spans residues 122-159; sequence GRRTHLKSGRTYHITYNQPKVEGIDDITGEKLVQRSDD. ATP-binding positions include Arg-123 and 132–133; that span reads TY. AMP-binding residues include Arg-156 and Arg-167. Gly-202 provides a ligand contact to ATP.

It belongs to the adenylate kinase family. In terms of assembly, monomer.

It localises to the cytoplasm. The enzyme catalyses AMP + ATP = 2 ADP. Its pathway is purine metabolism; AMP biosynthesis via salvage pathway; AMP from ADP: step 1/1. Catalyzes the reversible transfer of the terminal phosphate group between ATP and AMP. Plays an important role in cellular energy homeostasis and in adenine nucleotide metabolism. This Vesicomyosocius okutanii subsp. Calyptogena okutanii (strain HA) protein is Adenylate kinase.